Here is a 158-residue protein sequence, read N- to C-terminus: Large ribosomal subunit protein bL21 (158 aa).

The segment at 127–158 (TQETKSAASVKKAAKKSAPQKQAAVASNSKED) is disordered. Positions 131-158 (KSAASVKKAAKKSAPQKQAAVASNSKED) are enriched in low complexity.

This sequence belongs to the bacterial ribosomal protein bL21 family. In terms of assembly, part of the 50S ribosomal subunit. Contacts protein L20.

In terms of biological role, this protein binds to 23S rRNA in the presence of protein L20. In Bartonella henselae (strain ATCC 49882 / DSM 28221 / CCUG 30454 / Houston 1) (Rochalimaea henselae), this protein is Large ribosomal subunit protein bL21.